The chain runs to 527 residues: Benzoate--CoA ligase (527 aa).

Belongs to the ATP-dependent AMP-binding enzyme family. Benzoate-CoA ligase subfamily. In terms of assembly, monomer.

The catalysed reaction is benzoate + ATP + CoA = benzoyl-CoA + AMP + diphosphate. Catalyzes the ligation of benzoate and CoA to form benzoyl-CoA at the expense of ATP. The enzyme also ligates 2-aminobenzoate and CoA. The enzyme shows activity toward a number of benzoate derivatives. The chain is Benzoate--CoA ligase (bclA) from Thauera aromatica.